A 630-amino-acid polypeptide reads, in one-letter code: MMTKVGEVLLLLLLPAFVPHTDGTHYSLPGKPTEIKCRSPEKETFTCWWKPGSDGGLPTTYALYYRKEGSDVVHECPDYHTAGKNSCFFNKNNTLIWVSYNITVVATNALGKTYSDPQDIDVVYIVQPHPPEKLEVTVMKDQGWPFLRVSWEPPRKADTRSGWITLIYELRVKLEDEESEWENHAAGQQKMFNIFSLRSGGTYLIQVRCKPDHGFWSEWSSTSYVKVPEYLHREKSVWILVLVFSAFILLLLTWLIHMNSHSLKHCMLPPVPGPKIKGFDKQLLKSGKSDEVFSALVVSDFPPTTSNYEDLLVEYLEVYMPEQQELMVDKGKDHDGCLKSIGSASDSDSGRGSCDSDNLLMDKSGAPKEEQQQQNQEGDQIGKETQGPKEAWEKEAMPCANEDVVSPDASSEKVKTWPSVFSPVTPYSPLDPHNSLEMHKQHCLSNTQFPPGSPSSDHYIKEALQSSYWEVCFNNNQPYPQTEVHPQLQAHSDRNISAVNDRNAPTGLLLPTRMTEYVEVQRVNEENKVLLHPIPSGHSREKACPWVGQRDDYSKVKGVDSDNGLLLQREVVEEESMEMAGAAESCYTSSIAFTTPKQTACSPVALPVQDERVLAVSGYVDTATVFSVHT.

Residues 1–23 (MMTKVGEVLLLLLLPAFVPHTDG) form the signal peptide. Residues 24-234 (THYSLPGKPT…VKVPEYLHRE (211 aa)) are Extracellular-facing. Fibronectin type-III domains are found at residues 31-128 (KPTE…IVQP) and 130-230 (PPEK…VPEY). Disulfide bonds link C37-C47 and C76-C87. Residues N92 and N101 are each glycosylated (N-linked (GlcNAc...) asparagine). Positions 212 and 213 each coordinate Zn(2+). A WSXWS motif motif is present at residues 216–220 (WSEWS). The chain crosses the membrane as a helical span at residues 235–258 (KSVWILVLVFSAFILLLLTWLIHM). Over 259-630 (NSHSLKHCML…DTATVFSVHT (372 aa)) the chain is Cytoplasmic. The Box 1 motif motif lies at 267–275 (MLPPVPGPK). Residues 339–389 (KSIGSASDSDSGRGSCDSDNLLMDKSGAPKEEQQQQNQEGDQIGKETQGPK) form a disordered region. A compositionally biased stretch (low complexity) spans 340-357 (SIGSASDSDSGRGSCDSD). Residues 380 to 389 (QIGKETQGPK) show a composition bias toward basic and acidic residues.

The protein belongs to the type I cytokine receptor family. Type 1 subfamily.

The protein resides in the membrane. In terms of biological role, this is a receptor for the anterior pituitary hormone prolactin. The polypeptide is Prolactin receptor (prlr) (Oreochromis niloticus (Nile tilapia)).